We begin with the raw amino-acid sequence, 230 residues long: Movement and silencing protein TGBp1 (230 aa).

The (+)RNA virus helicase ATP-binding domain occupies 1–114 (MDSIINALTS…GLALRPHFIK (114 aa)). The region spanning 115–230 (SVSHRLCPAT…VRSPPPHPSH (116 aa)) is the (+)RNA virus helicase C-terminal domain.

This sequence belongs to the Tymovirales TGBp1 protein family. As to quaternary structure, homodimer and homooligomer. Interacts with capsid protein. Interacts with host AGO1; this interaction targets the host protein for degradation, thereby suppressing the antiviral RNA silencing.

Its subcellular location is the host cytoplasm. Transports viral genome to neighboring plant cells directly through plasmosdesmata, without any budding. The movement protein allows efficient cell to cell propagation, by bypassing the host cell wall barrier. Increases plasmodesma size exclusion limit. Acts as a suppressor of RNA-mediated gene silencing, also known as post-transcriptional gene silencing (PTGS), a mechanism of plant viral defense that limits the accumulation of viral RNAs. In Plantago asiatica (P1AMV), this protein is Movement and silencing protein TGBp1.